Reading from the N-terminus, the 314-residue chain is 4-hydroxy-3-methylbut-2-enyl diphosphate reductase (314 aa).

Residue Cys-12 coordinates [4Fe-4S] cluster. His-41 and His-74 together coordinate (2E)-4-hydroxy-3-methylbut-2-enyl diphosphate. Residues His-41 and His-74 each contribute to the dimethylallyl diphosphate site. Positions 41 and 74 each coordinate isopentenyl diphosphate. Cys-96 serves as a coordination point for [4Fe-4S] cluster. (2E)-4-hydroxy-3-methylbut-2-enyl diphosphate is bound at residue His-124. Dimethylallyl diphosphate is bound at residue His-124. His-124 lines the isopentenyl diphosphate pocket. Glu-126 functions as the Proton donor in the catalytic mechanism. Position 167 (Thr-167) interacts with (2E)-4-hydroxy-3-methylbut-2-enyl diphosphate. Cys-197 provides a ligand contact to [4Fe-4S] cluster. 4 residues coordinate (2E)-4-hydroxy-3-methylbut-2-enyl diphosphate: Ser-225, Ser-226, Asn-227, and Ser-269. Residues Ser-225, Ser-226, Asn-227, and Ser-269 each coordinate dimethylallyl diphosphate. 4 residues coordinate isopentenyl diphosphate: Ser-225, Ser-226, Asn-227, and Ser-269.

The protein belongs to the IspH family. It depends on [4Fe-4S] cluster as a cofactor.

It carries out the reaction isopentenyl diphosphate + 2 oxidized [2Fe-2S]-[ferredoxin] + H2O = (2E)-4-hydroxy-3-methylbut-2-enyl diphosphate + 2 reduced [2Fe-2S]-[ferredoxin] + 2 H(+). It catalyses the reaction dimethylallyl diphosphate + 2 oxidized [2Fe-2S]-[ferredoxin] + H2O = (2E)-4-hydroxy-3-methylbut-2-enyl diphosphate + 2 reduced [2Fe-2S]-[ferredoxin] + 2 H(+). The protein operates within isoprenoid biosynthesis; dimethylallyl diphosphate biosynthesis; dimethylallyl diphosphate from (2E)-4-hydroxy-3-methylbutenyl diphosphate: step 1/1. Its pathway is isoprenoid biosynthesis; isopentenyl diphosphate biosynthesis via DXP pathway; isopentenyl diphosphate from 1-deoxy-D-xylulose 5-phosphate: step 6/6. Catalyzes the conversion of 1-hydroxy-2-methyl-2-(E)-butenyl 4-diphosphate (HMBPP) into a mixture of isopentenyl diphosphate (IPP) and dimethylallyl diphosphate (DMAPP). Acts in the terminal step of the DOXP/MEP pathway for isoprenoid precursor biosynthesis. The protein is 4-hydroxy-3-methylbut-2-enyl diphosphate reductase of Glaesserella parasuis serovar 5 (strain SH0165) (Haemophilus parasuis).